The chain runs to 339 residues: DNA-directed RNA polymerase subunit alpha (339 aa).

Residues 1-233 (MVREEVAGST…DLFLPFLHAE (233 aa)) form an alpha N-terminal domain (alpha-NTD) region. Residues 264 to 339 (KKGIPLNCIF…IDLLKNKLSF (76 aa)) form an alpha C-terminal domain (alpha-CTD) region.

It belongs to the RNA polymerase alpha chain family. In plastids the minimal PEP RNA polymerase catalytic core is composed of four subunits: alpha, beta, beta', and beta''. When a (nuclear-encoded) sigma factor is associated with the core the holoenzyme is formed, which can initiate transcription.

The protein resides in the plastid. Its subcellular location is the chloroplast. The enzyme catalyses RNA(n) + a ribonucleoside 5'-triphosphate = RNA(n+1) + diphosphate. Functionally, DNA-dependent RNA polymerase catalyzes the transcription of DNA into RNA using the four ribonucleoside triphosphates as substrates. This chain is DNA-directed RNA polymerase subunit alpha, found in Crithopsis delileana.